The chain runs to 231 residues: Aquaporin Z (231 aa).

The next 2 helical transmembrane spans lie at 11 to 31 and 36 to 56; these read FLGT…AAAF and IGLL…AFAI. An NPA 1 motif is present at residues 65 to 67; sequence NPA. 3 helical membrane passes run 84–104, 132–152, and 161–181; these read LPYI…LYLI, MISV…VILG, and GFAP…SIPI. Positions 187–189 match the NPA 2 motif; the sequence is NPA. A helical membrane pass occupies residues 203-223; it reads VSQLWLFWAAPIIGAILAGVI.

This sequence belongs to the MIP/aquaporin (TC 1.A.8) family. In terms of assembly, homotetramer.

It is found in the cell inner membrane. It carries out the reaction H2O(in) = H2O(out). In terms of biological role, channel that permits osmotically driven movement of water in both directions. It is involved in the osmoregulation and in the maintenance of cell turgor during volume expansion in rapidly growing cells. It mediates rapid entry or exit of water in response to abrupt changes in osmolarity. In Shewanella oneidensis (strain ATCC 700550 / JCM 31522 / CIP 106686 / LMG 19005 / NCIMB 14063 / MR-1), this protein is Aquaporin Z.